Here is a 348-residue protein sequence, read N- to C-terminus: Ricin B-like lectin R40C1 (348 aa).

The segment at 1–26 (MFGFGHHGHHGQDQPPQHHGGGGGGA) is disordered. Residues 199–345 (TVRIFCKADE…CEGDNQRWKI (147 aa)) form the Ricin B-type lectin domain.

As to expression, expressed in roots and shoots.

Lectin which binds carbohydrates in vitro. Interacts through its lectin domain with glycan structures containing specific motifs. The chain is Ricin B-like lectin R40C1 from Oryza sativa subsp. japonica (Rice).